The sequence spans 486 residues: Cardiolipin synthase A (486 aa).

The next 2 helical transmembrane spans lie at 3–23 and 38–58; these read TFYT…IAGV and MAWL…YLSV. PLD phosphodiesterase domains are found at residues 219–246 and 399–426; these read MDLR…VDPR and EGGL…DMRS. Catalysis depends on residues histidine 224, lysine 226, aspartate 231, histidine 404, lysine 406, and aspartate 411.

It belongs to the phospholipase D family. Cardiolipin synthase subfamily. ClsA sub-subfamily.

It localises to the cell inner membrane. The enzyme catalyses 2 a 1,2-diacyl-sn-glycero-3-phospho-(1'-sn-glycerol) = a cardiolipin + glycerol. Functionally, catalyzes the reversible phosphatidyl group transfer from one phosphatidylglycerol molecule to another to form cardiolipin (CL) (diphosphatidylglycerol) and glycerol. In Salmonella paratyphi A (strain ATCC 9150 / SARB42), this protein is Cardiolipin synthase A.